Here is a 374-residue protein sequence, read N- to C-terminus: 4-hydroxy-3-methylbut-2-en-1-yl diphosphate synthase (flavodoxin) (374 aa).

4 residues coordinate [4Fe-4S] cluster: Cys-270, Cys-273, Cys-305, and Glu-312.

This sequence belongs to the IspG family. Requires [4Fe-4S] cluster as cofactor.

It catalyses the reaction (2E)-4-hydroxy-3-methylbut-2-enyl diphosphate + oxidized [flavodoxin] + H2O + 2 H(+) = 2-C-methyl-D-erythritol 2,4-cyclic diphosphate + reduced [flavodoxin]. Its pathway is isoprenoid biosynthesis; isopentenyl diphosphate biosynthesis via DXP pathway; isopentenyl diphosphate from 1-deoxy-D-xylulose 5-phosphate: step 5/6. Converts 2C-methyl-D-erythritol 2,4-cyclodiphosphate (ME-2,4cPP) into 1-hydroxy-2-methyl-2-(E)-butenyl 4-diphosphate. This is 4-hydroxy-3-methylbut-2-en-1-yl diphosphate synthase (flavodoxin) from Yersinia enterocolitica serotype O:8 / biotype 1B (strain NCTC 13174 / 8081).